A 746-amino-acid chain; its full sequence is Stromal interaction molecule 2 (746 aa).

Residues 1-14 (MLVLGLLVAGAADG) form the signal peptide. The Extracellular segment spans residues 15–218 (CELVPRHLRG…RPPHNWMKDF (204 aa)). Residues 67-102 (FSLEALQTIHKQMDDDKDGGIEVEESDEFIREDMKY) form the EF-hand domain. Ca(2+)-binding residues include Asp80, Asp82, Asp84, and Glu91. Residue Asn135 is glycosylated (N-linked (GlcNAc...) asparagine). An SAM domain is found at 136 to 204 (WTLEDTLQWL…QLKALDVVLF (69 aa)). Residues 219–235 (ILTVSIVIGVGGCWFAY) traverse the membrane as a helical segment. The Cytoplasmic portion of the chain corresponds to 236–746 (TQNKTSKEHV…IKSLFKKKSK (511 aa)). The stretch at 247-394 (KMMKDLESLQ…EKIKKKRSTV (148 aa)) forms a coiled coil. The tract at residues 483–562 (DLDEDTPPIV…SLPSPDPDIL (80 aa)) is disordered. Phosphoserine is present on Ser523. Positions 537 to 549 (HPSHPRHPHHPQH) are enriched in basic residues. Phosphoserine is present on residues Ser609, Ser621, Ser640, Ser650, Ser661, Ser665, Ser680, and Ser697. Positions 685–746 (SSGIPVPKPR…IKSLFKKKSK (62 aa)) are disordered. The segment covering 723-732 (DLCHNGEKSK) has biased composition (basic and acidic residues). The span at 733-746 (KPSKIKSLFKKKSK) shows a compositional bias: basic residues.

As to quaternary structure, oligomer with STIM1. Interacts with ORAI1. Glycosylated. Post-translationally, phosphorylated predominantly on Ser residues. As to expression, expressed in all tissues and tumor cell lines examined.

It is found in the endoplasmic reticulum membrane. Plays a role in mediating store-operated Ca(2+) entry (SOCE), a Ca(2+) influx following depletion of intracellular Ca(2+) stores. Functions as a highly sensitive Ca(2+) sensor in the endoplasmic reticulum which activates both store-operated and store-independent Ca(2+)-influx. Regulates basal cytosolic and endoplasmic reticulum Ca(2+) concentrations. Upon mild variations of the endoplasmic reticulum Ca(2+) concentration, translocates from the endoplasmic reticulum to the plasma membrane where it probably activates the Ca(2+) release-activated Ca(2+) (CRAC) channels ORAI1, ORAI2 and ORAI3. May inhibit STIM1-mediated Ca(2+) influx. This is Stromal interaction molecule 2 (STIM2) from Homo sapiens (Human).